The primary structure comprises 154 residues: Catabolic 3-dehydroquinase (154 aa).

The Proton acceptor role is filled by tyrosine 25. The substrate site is built by asparagine 79, histidine 85, and aspartate 92. Histidine 105 acts as the Proton donor in catalysis. Substrate is bound by residues 106–107 and arginine 116; that span reads IS.

This sequence belongs to the type-II 3-dehydroquinase family. In terms of assembly, homododecamer. Adopts a ring-like structure, composed of an arrangement of two hexameric rings stacked on top of one another.

It catalyses the reaction 3-dehydroquinate = 3-dehydroshikimate + H2O. It functions in the pathway aromatic compound metabolism; 3,4-dihydroxybenzoate biosynthesis; 3,4-dihydroxybenzoate from 3-dehydroquinate: step 1/2. Functionally, is involved in the catabolism of quinate. Allows the utilization of quinate as carbon source via the beta-ketoadipate pathway. The sequence is that of Catabolic 3-dehydroquinase from Sclerotinia sclerotiorum (strain ATCC 18683 / 1980 / Ss-1) (White mold).